Here is a 529-residue protein sequence, read N- to C-terminus: Bifunctional purine biosynthesis protein PurH (529 aa).

The MGS-like domain maps to 1 to 148 (MQQRRPVRRA…KNHKDVAIVV (148 aa)).

The protein belongs to the PurH family.

It catalyses the reaction (6R)-10-formyltetrahydrofolate + 5-amino-1-(5-phospho-beta-D-ribosyl)imidazole-4-carboxamide = 5-formamido-1-(5-phospho-D-ribosyl)imidazole-4-carboxamide + (6S)-5,6,7,8-tetrahydrofolate. The catalysed reaction is IMP + H2O = 5-formamido-1-(5-phospho-D-ribosyl)imidazole-4-carboxamide. It participates in purine metabolism; IMP biosynthesis via de novo pathway; 5-formamido-1-(5-phospho-D-ribosyl)imidazole-4-carboxamide from 5-amino-1-(5-phospho-D-ribosyl)imidazole-4-carboxamide (10-formyl THF route): step 1/1. It functions in the pathway purine metabolism; IMP biosynthesis via de novo pathway; IMP from 5-formamido-1-(5-phospho-D-ribosyl)imidazole-4-carboxamide: step 1/1. This Salmonella agona (strain SL483) protein is Bifunctional purine biosynthesis protein PurH.